The primary structure comprises 1399 residues: DNA-directed RNA polymerase subunit beta' (1399 aa).

Zn(2+) contacts are provided by C70, C72, C85, and C88. The Mg(2+) site is built by D460, D462, and D464. Zn(2+)-binding residues include C814, C888, C895, and C898. A disordered region spans residues 1367 to 1399 (SERKRQRDLGKPQRVSASEAEAALTEALNSSGN). Positions 1382-1399 (SASEAEAALTEALNSSGN) are enriched in low complexity.

It belongs to the RNA polymerase beta' chain family. As to quaternary structure, the RNAP catalytic core consists of 2 alpha, 1 beta, 1 beta' and 1 omega subunit. When a sigma factor is associated with the core the holoenzyme is formed, which can initiate transcription. The cofactor is Mg(2+). Requires Zn(2+) as cofactor.

It carries out the reaction RNA(n) + a ribonucleoside 5'-triphosphate = RNA(n+1) + diphosphate. Its function is as follows. DNA-dependent RNA polymerase catalyzes the transcription of DNA into RNA using the four ribonucleoside triphosphates as substrates. The chain is DNA-directed RNA polymerase subunit beta' from Pseudomonas paraeruginosa (strain DSM 24068 / PA7) (Pseudomonas aeruginosa (strain PA7)).